Here is a 227-residue protein sequence, read N- to C-terminus: uncharacterized protein (227 aa).

An N-terminal signal peptide occupies residues 1 to 21 (MELKKIAVGLTALLGMSVANA).

This is an uncharacterized protein from Haemophilus influenzae (strain ATCC 51907 / DSM 11121 / KW20 / Rd).